Reading from the N-terminus, the 483-residue chain is Myocilin (483 aa).

Positions 1-18 (MPTAQLLLLACLLWGLEA) are cleaved as a signal peptide. N-linked (GlcNAc...) asparagine glycosylation is present at Asn43. The stretch at 51–162 (GQAMSAIQDL…SQEVARLRRG (112 aa)) forms a coiled coil. Positions 153–179 (SQEVARLRRGQCPQAHSSSQDVPAGSR) are disordered. The Olfactomedin-like domain occupies 223–482 (GCGELVWVGE…MVTYDIRLSK (260 aa)). Residues Cys224 and Cys412 are joined by a disulfide bond. Ca(2+)-binding residues include Asp359, Asn407, Ala408, Ile456, and Asp457. The short motif at 481 to 483 (SKM) is the Microbody targeting signal element.

As to quaternary structure, homodimer (via N-terminus). Can also form higher oligomers. Interacts with OLFM3, FN1, NRCAM, GLDN and NFASC. Interacts (via N-terminus) with MYL2. Interacts with SFRP1, FRZB, FZD7, FZD10, FZD1 and WIF1; regulates Wnt signaling. Interacts with SNTA1; regulates muscle hypertrophy. Interacts with ERBB2 and ERBB3; activates ERBB2-ERBB3 signaling pathway. Interacts with SNCG; affects its secretion and its aggregation. In terms of processing, N-glycosylated. Post-translationally, palmitoylated. Undergoes a calcium-dependent proteolytic cleavage at Arg-205 by CAPN2 in the endoplasmic reticulum. The result is the production of two fragments, one of 35 kDa containing the C-terminal olfactomedin-like domain, and another of 20 kDa containing the N-terminal leucine zipper-like domain. As to expression, expressed in optic nerve head, ciliary body and retina.

The protein resides in the secreted. Its subcellular location is the golgi apparatus. It localises to the cytoplasmic vesicle. It is found in the extracellular space. The protein localises to the extracellular matrix. The protein resides in the extracellular exosome. Its subcellular location is the mitochondrion. It localises to the mitochondrion intermembrane space. It is found in the mitochondrion inner membrane. The protein localises to the mitochondrion outer membrane. The protein resides in the rough endoplasmic reticulum. Its subcellular location is the cell projection. It localises to the cilium. It is found in the endoplasmic reticulum. Functionally, secreted glycoprotein regulating the activation of different signaling pathways in adjacent cells to control different processes including cell adhesion, cell-matrix adhesion, cytoskeleton organization and cell migration. Promotes substrate adhesion, spreading and formation of focal contacts. Negatively regulates cell-matrix adhesion and stress fiber assembly through Rho protein signal transduction. Modulates the organization of actin cytoskeleton by stimulating the formation of stress fibers through interactions with components of Wnt signaling pathways. Promotes cell migration through activation of PTK2 and the downstream phosphatidylinositol 3-kinase signaling. Plays a role in bone formation and promotes osteoblast differentiation in a dose-dependent manner through mitogen-activated protein kinase signaling. Mediates myelination in the peripheral nervous system through ERBB2/ERBB3 signaling. Plays a role as a regulator of muscle hypertrophy through the components of dystrophin-associated protein complex. Involved in positive regulation of mitochondrial depolarization. Plays a role in neurite outgrowth. May participate in the obstruction of fluid outflow in the trabecular meshwork. The protein is Myocilin (MYOC) of Canis lupus familiaris (Dog).